A 109-amino-acid chain; its full sequence is Spermidine export protein MdtI (109 aa).

A run of 4 helical transmembrane segments spans residues 6–26 (WIHA…NVFL), 36–56 (IYGI…SQAV), 64–84 (AYAL…WVLF), and 88–108 (LNNK…LIKL).

This sequence belongs to the drug/metabolite transporter (DMT) superfamily. Small multidrug resistance (SMR) (TC 2.A.7.1) family. MdtI subfamily. Forms a complex with MdtJ.

The protein resides in the cell inner membrane. Its function is as follows. Catalyzes the excretion of spermidine. This is Spermidine export protein MdtI from Klebsiella pneumoniae subsp. pneumoniae (strain ATCC 700721 / MGH 78578).